The chain runs to 89 residues: Chromosomal protein MC1a (89 aa).

Protects DNA against thermal denaturation and modulates transcription. This is Chromosomal protein MC1a from Methanothrix soehngenii (Methanosaeta concilii).